The primary structure comprises 216 residues: Octanoyltransferase (216 aa).

The BPL/LPL catalytic domain maps to 31–205 (STTRDEVWLV…ELVTLLDYEQ (175 aa)). Substrate contacts are provided by residues 70–77 (RGGQVTYH), 137–139 (SLG), and 150–152 (GLA). The active-site Acyl-thioester intermediate is the C168.

The protein belongs to the LipB family.

Its subcellular location is the cytoplasm. It catalyses the reaction octanoyl-[ACP] + L-lysyl-[protein] = N(6)-octanoyl-L-lysyl-[protein] + holo-[ACP] + H(+). Its pathway is protein modification; protein lipoylation via endogenous pathway; protein N(6)-(lipoyl)lysine from octanoyl-[acyl-carrier-protein]: step 1/2. In terms of biological role, catalyzes the transfer of endogenously produced octanoic acid from octanoyl-acyl-carrier-protein onto the lipoyl domains of lipoate-dependent enzymes. Lipoyl-ACP can also act as a substrate although octanoyl-ACP is likely to be the physiological substrate. The protein is Octanoyltransferase of Vibrio cholerae serotype O1 (strain ATCC 39541 / Classical Ogawa 395 / O395).